The following is a 553-amino-acid chain: Glutamate--tRNA ligase (553 aa).

The 'HIGH' region signature appears at 98-108 (PNPSGPLHIGH).

The protein belongs to the class-I aminoacyl-tRNA synthetase family. Glutamate--tRNA ligase type 2 subfamily.

The protein resides in the cytoplasm. The catalysed reaction is tRNA(Glu) + L-glutamate + ATP = L-glutamyl-tRNA(Glu) + AMP + diphosphate. In terms of biological role, catalyzes the attachment of glutamate to tRNA(Glu) in a two-step reaction: glutamate is first activated by ATP to form Glu-AMP and then transferred to the acceptor end of tRNA(Glu). This chain is Glutamate--tRNA ligase, found in Methanocaldococcus jannaschii (strain ATCC 43067 / DSM 2661 / JAL-1 / JCM 10045 / NBRC 100440) (Methanococcus jannaschii).